The chain runs to 372 residues: Dual-specificity RNA methyltransferase RlmN (372 aa).

The active-site Proton acceptor is the E92. Residues 98–337 enclose the Radical SAM core domain; it reads ETDRATLCVS…VILRKTRGDD (240 aa). An intrachain disulfide couples C105 to C342. The [4Fe-4S] cluster site is built by C112, C116, and C119. S-adenosyl-L-methionine contacts are provided by residues 166 to 167, S198, 220 to 222, and N299; these read GE and SLH. C342 serves as the catalytic S-methylcysteine intermediate.

Belongs to the radical SAM superfamily. RlmN family. The cofactor is [4Fe-4S] cluster.

Its subcellular location is the cytoplasm. It catalyses the reaction adenosine(2503) in 23S rRNA + 2 reduced [2Fe-2S]-[ferredoxin] + 2 S-adenosyl-L-methionine = 2-methyladenosine(2503) in 23S rRNA + 5'-deoxyadenosine + L-methionine + 2 oxidized [2Fe-2S]-[ferredoxin] + S-adenosyl-L-homocysteine. It carries out the reaction adenosine(37) in tRNA + 2 reduced [2Fe-2S]-[ferredoxin] + 2 S-adenosyl-L-methionine = 2-methyladenosine(37) in tRNA + 5'-deoxyadenosine + L-methionine + 2 oxidized [2Fe-2S]-[ferredoxin] + S-adenosyl-L-homocysteine. Specifically methylates position 2 of adenine 2503 in 23S rRNA and position 2 of adenine 37 in tRNAs. m2A2503 modification seems to play a crucial role in the proofreading step occurring at the peptidyl transferase center and thus would serve to optimize ribosomal fidelity. In Histophilus somni (strain 129Pt) (Haemophilus somnus), this protein is Dual-specificity RNA methyltransferase RlmN.